An 84-amino-acid chain; its full sequence is MMFRLTSVSCFLLVIACLNLFQVVLTSRCFPPGIYCTPYLPCCWGICCGTCRNDNSSLTFLQFCLPFFFFLRPSHPLFLLLPAR.

The signal sequence occupies residues 1–26 (MMFRLTSVSCFLLVIACLNLFQVVLT). Intrachain disulfides connect cysteine 29-cysteine 43, cysteine 36-cysteine 48, cysteine 42-cysteine 51, and cysteine 47-cysteine 64. Residues 71–84 (LRPSHPLFLLLPAR) constitute a propeptide that is removed on maturation.

Belongs to the conotoxin I2 superfamily. Expressed by the venom duct.

The protein localises to the secreted. Inhibits the vertebrate voltage-gated potassium channels Kv1.1/KCNA1 and Kv1.3/KCNA3. The protein is Kappa-conotoxin-like Im11.3 of Conus imperialis (Imperial cone).